The chain runs to 483 residues: Malonate-semialdehyde dehydrogenase 2 (483 aa).

Residues phenylalanine 152, lysine 176, glutamate 179, arginine 180, and serine 229 each contribute to the NAD(+) site. Cysteine 284 functions as the Nucleophile in the catalytic mechanism. Residue glutamate 384 coordinates NAD(+).

The protein belongs to the aldehyde dehydrogenase family. IolA subfamily. As to quaternary structure, homotetramer.

The enzyme catalyses 3-oxopropanoate + NAD(+) + CoA + H2O = hydrogencarbonate + acetyl-CoA + NADH + H(+). It catalyses the reaction 2-methyl-3-oxopropanoate + NAD(+) + CoA + H2O = propanoyl-CoA + hydrogencarbonate + NADH + H(+). The protein operates within polyol metabolism; myo-inositol degradation into acetyl-CoA; acetyl-CoA from myo-inositol: step 7/7. Its function is as follows. Catalyzes the oxidation of malonate semialdehyde (MSA) and methylmalonate semialdehyde (MMSA) into acetyl-CoA and propanoyl-CoA, respectively. Is involved in a myo-inositol catabolic pathway. Bicarbonate, and not CO2, is the end-product of the enzymatic reaction. The sequence is that of Malonate-semialdehyde dehydrogenase 2 from Geobacillus thermodenitrificans (strain NG80-2).